We begin with the raw amino-acid sequence, 441 residues long: MRRILLSMIVLIFLASPILAKNIVYVAQIKGQITSYTYDQFDRYITIAEQDNAEAIIIELDTPGGRADAMMNIVQRIQQSKIPVIIYVYPPGASAASAGTYIALGSHLIAMAPGTSIGACRPILGYSQNGSIIEAPPKITNYFIAYIKSLAQESGRNATIAEEFITKDLSLTPEEALKYGVIEVVARDINELLKKSNGMKTKIPVNGRYVTLNFTNVEVRYLAPSFKDKLISYITDPNVAYLLLTLGIWALIIGFLTPGWHVPETVGAIMIILAIIGFGYFGYNSAGILLIIVAMLFFIAEALTPTFGLFTVAGLITFIIGGILLFGGGEEYLVRKEVFSQLRILIITVGAILAAFFAFGMAAVIRAHKKKARTGKEEMIGLIGTVVEELNPEGMIKVRGELWKARSKFNGKIEKGEKVRVVDMDGLTLIVVRERKEGGEK.

The signal sequence occupies residues 1–20; that stretch reads MRRILLSMIVLIFLASPILA. 64–67 contacts substrate; that stretch reads GGRA. S97 serves as the catalytic Nucleophile. 119–124 provides a ligand contact to substrate; that stretch reads ACRPIL. Catalysis depends on K138, which acts as the Proton donor/acceptor. A run of 4 helical transmembrane segments spans residues 239–259, 271–291, 307–327, and 344–364; these read VAYL…LTPG, IILA…ILLI, FGLF…LLFG, and ILII…MAAV.

The protein belongs to the peptidase S14 family. Homodimer.

It localises to the membrane. With respect to regulation, inhibited by divalent metal cations, including Mg(2+), Mn(2+), Ca(2+) and Zn(2+). Mildly inhibited by 0.01 % SDS and 0.1% dodecyl-beta-D-maltoside. Activity is nearly abolished by 1 % SDS. Functionally, protease that cleaves its substrates preferentially near hydrophobic or aromatic amino acid residues. Can degrade casein and the stomatin homolog PH1511 (in vitro). The chain is Membrane-bound protease PH1510 from Pyrococcus horikoshii (strain ATCC 700860 / DSM 12428 / JCM 9974 / NBRC 100139 / OT-3).